The sequence spans 371 residues: Aminomethyltransferase (371 aa).

This sequence belongs to the GcvT family. As to quaternary structure, the glycine cleavage system is composed of four proteins: P, T, L and H.

It catalyses the reaction N(6)-[(R)-S(8)-aminomethyldihydrolipoyl]-L-lysyl-[protein] + (6S)-5,6,7,8-tetrahydrofolate = N(6)-[(R)-dihydrolipoyl]-L-lysyl-[protein] + (6R)-5,10-methylene-5,6,7,8-tetrahydrofolate + NH4(+). The glycine cleavage system catalyzes the degradation of glycine. This Leptospira interrogans serogroup Icterohaemorrhagiae serovar Lai (strain 56601) protein is Aminomethyltransferase.